The chain runs to 225 residues: Membrane protein (225 aa).

The Virion surface portion of the chain corresponds to 1 to 20 (MSNETNCTLDFEQSVELFKE). The helical transmembrane segment at 21–41 (YNLFITAFLLFLTIILQYGYA) threads the bilayer. Residues 42–51 (TRSKFIYILK) are Intravirion-facing. The helical transmembrane segment at 52-72 (MIVLWCFWPLNIAVGVISCIY) threads the bilayer. The Virion surface portion of the chain corresponds to 73–77 (PPNTG). The chain crosses the membrane as a helical span at residues 78–98 (GLVAAIILTVFACLSFVGYWI). Residues 99–225 (QSIRLFKRCR…VATGGSSLYT (127 aa)) are Intravirion-facing.

The protein belongs to the gammacoronaviruses M protein family. In terms of assembly, homomultimer. Interacts with envelope E protein in the budding compartment of the host cell, which is located between endoplasmic reticulum and the Golgi complex. Forms a complex with HE and S proteins. Interacts with nucleocapsid N protein. This interaction probably participates in RNA packaging into the virus.

The protein resides in the virion membrane. The protein localises to the host Golgi apparatus membrane. Its function is as follows. Component of the viral envelope that plays a central role in virus morphogenesis and assembly via its interactions with other viral proteins. The chain is Membrane protein from Gallus gallus (Chicken).